We begin with the raw amino-acid sequence, 104 residues long: Urease subunit gamma (104 aa).

The protein belongs to the urease gamma subunit family. In terms of assembly, heterotrimer of UreA (gamma), UreB (beta) and UreC (alpha) subunits. Three heterotrimers associate to form the active enzyme.

Its subcellular location is the cytoplasm. The catalysed reaction is urea + 2 H2O + H(+) = hydrogencarbonate + 2 NH4(+). Its pathway is nitrogen metabolism; urea degradation; CO(2) and NH(3) from urea (urease route): step 1/1. The protein is Urease subunit gamma of Actinomyces naeslundii.